The following is a 182-amino-acid chain: Large ribosomal subunit protein uL5 (182 aa).

Belongs to the universal ribosomal protein uL5 family. Part of the 50S ribosomal subunit; part of the 5S rRNA/L5/L18/L25 subcomplex. Contacts the 5S rRNA and the P site tRNA. Forms a bridge to the 30S subunit in the 70S ribosome.

Its function is as follows. This is one of the proteins that bind and probably mediate the attachment of the 5S RNA into the large ribosomal subunit, where it forms part of the central protuberance. In the 70S ribosome it contacts protein S13 of the 30S subunit (bridge B1b), connecting the 2 subunits; this bridge is implicated in subunit movement. Contacts the P site tRNA; the 5S rRNA and some of its associated proteins might help stabilize positioning of ribosome-bound tRNAs. The polypeptide is Large ribosomal subunit protein uL5 (Borrelia duttonii (strain Ly)).